A 222-amino-acid polypeptide reads, in one-letter code: Protein GrpE (222 aa).

The interval 1–82 (MSDFNKDEYL…KADDTLTPLG (82 aa)) is disordered. Residues 20–71 (SGQAAPAAASADSAAAAAGATQEGAAQPAAAQSQENGDSAAADGADKAGAAD) show a composition bias toward low complexity.

This sequence belongs to the GrpE family. As to quaternary structure, homodimer.

It is found in the cytoplasm. Functionally, participates actively in the response to hyperosmotic and heat shock by preventing the aggregation of stress-denatured proteins, in association with DnaK and GrpE. It is the nucleotide exchange factor for DnaK and may function as a thermosensor. Unfolded proteins bind initially to DnaJ; upon interaction with the DnaJ-bound protein, DnaK hydrolyzes its bound ATP, resulting in the formation of a stable complex. GrpE releases ADP from DnaK; ATP binding to DnaK triggers the release of the substrate protein, thus completing the reaction cycle. Several rounds of ATP-dependent interactions between DnaJ, DnaK and GrpE are required for fully efficient folding. This is Protein GrpE from Bifidobacterium adolescentis (strain ATCC 15703 / DSM 20083 / NCTC 11814 / E194a).